The chain runs to 220 residues: Putative amino-acid transporter YisU (220 aa).

Transmembrane regions (helical) follow at residues 15 to 35 (FFSM…ILPL), 67 to 87 (TLLI…LPVF), 89 to 109 (TVMM…TWNI), 128 to 148 (AFAA…IGVI), 161 to 181 (WLFM…LAIA), and 195 to 215 (MLIV…YFGV).

This sequence belongs to the LysE/ArgO transporter (TC 2.A.75) family.

Its subcellular location is the cell membrane. This chain is Putative amino-acid transporter YisU (yisU), found in Bacillus subtilis (strain 168).